The chain runs to 192 residues: dTTP/UTP pyrophosphatase (192 aa).

The active-site Proton acceptor is aspartate 70.

It belongs to the Maf family. YhdE subfamily. Requires a divalent metal cation as cofactor.

The protein resides in the cytoplasm. It catalyses the reaction dTTP + H2O = dTMP + diphosphate + H(+). It carries out the reaction UTP + H2O = UMP + diphosphate + H(+). Nucleoside triphosphate pyrophosphatase that hydrolyzes dTTP and UTP. May have a dual role in cell division arrest and in preventing the incorporation of modified nucleotides into cellular nucleic acids. The sequence is that of dTTP/UTP pyrophosphatase from Clostridium perfringens (strain ATCC 13124 / DSM 756 / JCM 1290 / NCIMB 6125 / NCTC 8237 / Type A).